A 370-amino-acid chain; its full sequence is tRNA-specific 2-thiouridylase MnmA (370 aa).

ATP-binding positions include 24–31 and Leu50; that span reads AMSGGVDS. The Nucleophile role is filled by Cys119. A disulfide bond links Cys119 and Cys215. Gly143 lines the ATP pocket. Positions 165 to 167 are interaction with tRNA; that stretch reads KDQ. Residue Cys215 is the Cysteine persulfide intermediate of the active site.

Belongs to the MnmA/TRMU family.

Its subcellular location is the cytoplasm. It carries out the reaction S-sulfanyl-L-cysteinyl-[protein] + uridine(34) in tRNA + AH2 + ATP = 2-thiouridine(34) in tRNA + L-cysteinyl-[protein] + A + AMP + diphosphate + H(+). In terms of biological role, catalyzes the 2-thiolation of uridine at the wobble position (U34) of tRNA, leading to the formation of s(2)U34. The sequence is that of tRNA-specific 2-thiouridylase MnmA from Wolbachia pipientis wMel.